A 149-amino-acid polypeptide reads, in one-letter code: D-aminoacyl-tRNA deacylase (149 aa).

The Gly-cisPro motif, important for rejection of L-amino acids motif lies at 137 to 138 (GP).

The protein belongs to the DTD family. In terms of assembly, homodimer.

The protein localises to the cytoplasm. It carries out the reaction glycyl-tRNA(Ala) + H2O = tRNA(Ala) + glycine + H(+). The catalysed reaction is a D-aminoacyl-tRNA + H2O = a tRNA + a D-alpha-amino acid + H(+). In terms of biological role, an aminoacyl-tRNA editing enzyme that deacylates mischarged D-aminoacyl-tRNAs. Also deacylates mischarged glycyl-tRNA(Ala), protecting cells against glycine mischarging by AlaRS. Acts via tRNA-based rather than protein-based catalysis; rejects L-amino acids rather than detecting D-amino acids in the active site. By recycling D-aminoacyl-tRNA to D-amino acids and free tRNA molecules, this enzyme counteracts the toxicity associated with the formation of D-aminoacyl-tRNA entities in vivo and helps enforce protein L-homochirality. The protein is D-aminoacyl-tRNA deacylase of Desulfitobacterium hafniense (strain DSM 10664 / DCB-2).